A 916-amino-acid chain; its full sequence is Protein O-GlcNAcase (916 aa).

Residues 1-46 (MVQKESQAALEERESERNANPAAASGASLEQSVAPAPGEDNPSGAG) are disordered. One can recognise a GH84 domain in the interval 60–336 (FLCGVVEGFY…TLATWYKSNM (277 aa)). 3 residues coordinate a protein: Gly-67, Lys-98, and Asp-174. Asp-175 acts as the Proton donor in catalysis. Residues Tyr-219, 278–280 (WDN), Asp-285, and Asn-313 contribute to the a protein site. Ser-364 carries the post-translational modification Phosphoserine. The tract at residues 443 to 465 (ALSGEPSVLTKEEEKKQPDEEPM) is disordered. Over residues 452-461 (TKEEEKKQPD) the composition is skewed to basic and acidic residues.

It belongs to the glycosyl hydrolase 84 family. As to quaternary structure, monomer. Interacts with CLOCK. In terms of processing, proteolytically cleaved by caspase-3 during apoptosis. The fragments interact with each other; cleavage does not decrease enzyme activity.

It localises to the cytoplasm. The protein localises to the nucleus. The catalysed reaction is 3-O-(N-acetyl-beta-D-glucosaminyl)-L-seryl-[protein] + H2O = N-acetyl-D-glucosamine + L-seryl-[protein]. The enzyme catalyses 3-O-(N-acetyl-beta-D-glucosaminyl)-L-threonyl-[protein] + H2O = L-threonyl-[protein] + N-acetyl-D-glucosamine. Cleaves GlcNAc but not GalNAc from O-glycosylated proteins. Deglycosylates a large and diverse number of proteins, such as CRYAB, ELK1, GSDMD, LMNB1 and TAB1. Can use p-nitrophenyl-beta-GlcNAc and 4-methylumbelliferone-GlcNAc as substrates but not p-nitrophenyl-beta-GalNAc or p-nitrophenyl-alpha-GlcNAc (in vitro). Does not bind acetyl-CoA and does not have histone acetyltransferase activity. The sequence is that of Protein O-GlcNAcase from Mus musculus (Mouse).